Reading from the N-terminus, the 880-residue chain is Leucine--tRNA ligase (880 aa).

The short motif at Pro-46–His-56 is the 'HIGH' region element. The 'KMSKS' region signature appears at Lys-638–Ser-642. Lys-641 serves as a coordination point for ATP.

Belongs to the class-I aminoacyl-tRNA synthetase family.

The protein resides in the cytoplasm. The enzyme catalyses tRNA(Leu) + L-leucine + ATP = L-leucyl-tRNA(Leu) + AMP + diphosphate. This chain is Leucine--tRNA ligase, found in Stenotrophomonas maltophilia (strain R551-3).